Consider the following 76-residue polypeptide: Putative snRNP Sm-like protein (76 aa).

One can recognise a Sm domain in the interval 4–76 (RPLDVIHKSL…VLALSPVELE (73 aa)).

This sequence belongs to the snRNP Sm proteins family.

The sequence is that of Putative snRNP Sm-like protein from Thermococcus kodakarensis (strain ATCC BAA-918 / JCM 12380 / KOD1) (Pyrococcus kodakaraensis (strain KOD1)).